The chain runs to 283 residues: 2-dehydro-3-deoxyphosphooctonate aldolase (283 aa).

It belongs to the KdsA family.

It is found in the cytoplasm. It carries out the reaction D-arabinose 5-phosphate + phosphoenolpyruvate + H2O = 3-deoxy-alpha-D-manno-2-octulosonate-8-phosphate + phosphate. It participates in carbohydrate biosynthesis; 3-deoxy-D-manno-octulosonate biosynthesis; 3-deoxy-D-manno-octulosonate from D-ribulose 5-phosphate: step 2/3. Its pathway is bacterial outer membrane biogenesis; lipopolysaccharide biosynthesis. In Synechococcus sp. (strain WH7803), this protein is 2-dehydro-3-deoxyphosphooctonate aldolase.